A 242-amino-acid polypeptide reads, in one-letter code: 2-amino-5-formylamino-6-ribosylaminopyrimidin-4(3H)-one 5'-monophosphate deformylase (242 aa).

Residues glutamate 46, histidine 48, aspartate 57, and histidine 125 each coordinate Fe cation.

It belongs to the creatininase superfamily. FAPy deformylase family. Homodimer. Fe(2+) serves as cofactor. Zn(2+) is required as a cofactor.

The catalysed reaction is 2-amino-5-formylamino-6-(5-phospho-D-ribosylamino)pyrimidin-4(3H)-one + H2O = 2,5-diamino-6-(1-D-ribosylamino)pyrimidin-4(3H)-one 5'-phosphate + formate + H(+). Its pathway is cofactor biosynthesis; coenzyme F420 biosynthesis. It functions in the pathway cofactor biosynthesis; riboflavin biosynthesis. Catalyzes the hydrolysis of the formamide of 2-amino-5-formylamino-6-ribosylamino-4(3H)-pyrimidinone 5'-monophosphate (FAPy) to form 2,5-diamino-6-ribosylamino-4(3H)-pyrimidinone 5'-phosphate (APy). The chain is 2-amino-5-formylamino-6-ribosylaminopyrimidin-4(3H)-one 5'-monophosphate deformylase from Methanococcus aeolicus (strain ATCC BAA-1280 / DSM 17508 / OCM 812 / Nankai-3).